The following is a 145-amino-acid chain: Lysozyme-like protein 4 (145 aa).

The first 19 residues, Met1–Ala19, serve as a signal peptide directing secretion. The region spanning Ser20 to Leu145 is the C-type lysozyme domain. Intrachain disulfides connect Cys25/Cys143, Cys49/Cys130, Cys84/Cys95, and Cys91/Cys109. Glu54 is an active-site residue.

The protein belongs to the glycosyl hydrolase 22 family. Monomer. Expressed in the brain, lung, ovary, uterus and testis. In testis expressed in the germinal epithelium and on the maturing spermatozoa (at protein level).

It is found in the secreted. It localises to the cytoplasmic vesicle. Its subcellular location is the secretory vesicle. The protein resides in the acrosome. The protein localises to the cell projection. It is found in the cilium. It localises to the flagellum. May be involved in fertilization. Has no detectable bacteriolytic and lysozyme activities in vitro. This chain is Lysozyme-like protein 4 (Lyzl4), found in Rattus norvegicus (Rat).